Here is a 358-residue protein sequence, read N- to C-terminus: Putative pyruvyl transferase EpsI (358 aa).

This sequence belongs to the polysaccharide pyruvyl transferase family.

In terms of biological role, may be involved in the production of the exopolysaccharide (EPS) component of the extracellular matrix during biofilm formation. EPS is responsible for the adhesion of chains of cells into bundles. This Bacillus subtilis (strain 168) protein is Putative pyruvyl transferase EpsI (epsI).